We begin with the raw amino-acid sequence, 47 residues long: Delta-actitoxin-Aspp1a (47 aa).

3 disulfides stabilise this stretch: C4-C44, C6-C34, and C27-C45.

It belongs to the sea anemone sodium channel inhibitory toxin family. Type I subfamily.

The protein resides in the secreted. It localises to the nematocyst. Functionally, binds specifically to voltage-gated sodium channels (Nav) (site 3), thereby delaying their inactivation during signal transduction. Has a heart stimulation effect on isolated rat atria that is higher than that of Hk7a, Hk8a and Hk16a. This is Delta-actitoxin-Aspp1a from Anthopleura sp. (strain 'Zhanjiang') (Sea anemone).